The primary structure comprises 286 residues: 4-hydroxybenzoate octaprenyltransferase (286 aa).

7 consecutive transmembrane segments (helical) span residues 21-40 (GTLL…AGGM), 95-115 (ILFV…NGLV), 142-162 (FLGI…TGEV), 167-187 (WWLF…YAMV), 210-230 (QIIG…GWSA), 235-255 (LYGL…MLIF), and 266-286 (FLNN…DYLI).

It belongs to the UbiA prenyltransferase family. It depends on Mg(2+) as a cofactor.

The protein localises to the cell inner membrane. It carries out the reaction all-trans-octaprenyl diphosphate + 4-hydroxybenzoate = 4-hydroxy-3-(all-trans-octaprenyl)benzoate + diphosphate. Its pathway is cofactor biosynthesis; ubiquinone biosynthesis. Catalyzes the prenylation of para-hydroxybenzoate (PHB) with an all-trans polyprenyl group. Mediates the second step in the final reaction sequence of ubiquinone-8 (UQ-8) biosynthesis, which is the condensation of the polyisoprenoid side chain with PHB, generating the first membrane-bound Q intermediate 3-octaprenyl-4-hydroxybenzoate. The protein is 4-hydroxybenzoate octaprenyltransferase of Shewanella baltica (strain OS155 / ATCC BAA-1091).